Here is a 295-residue protein sequence, read N- to C-terminus: Small ribosomal subunit protein uS2 (295 aa).

The disordered stretch occupies residues 264–295 (KFSKTKNIDEETNTEFEQALNDTDENKNADNA).

Belongs to the universal ribosomal protein uS2 family.

This is Small ribosomal subunit protein uS2 from Rickettsia akari (strain Hartford).